Consider the following 201-residue polypeptide: Potassium-transporting ATPase KdpC subunit (201 aa).

The chain crosses the membrane as a helical span at residues 13–33 (IIFMIFTILCGGIYTIFITGI).

It belongs to the KdpC family. In terms of assembly, the system is composed of three essential subunits: KdpA, KdpB and KdpC.

It is found in the cell membrane. In terms of biological role, part of the high-affinity ATP-driven potassium transport (or Kdp) system, which catalyzes the hydrolysis of ATP coupled with the electrogenic transport of potassium into the cytoplasm. This subunit acts as a catalytic chaperone that increases the ATP-binding affinity of the ATP-hydrolyzing subunit KdpB by the formation of a transient KdpB/KdpC/ATP ternary complex. The chain is Potassium-transporting ATPase KdpC subunit from Clostridium botulinum (strain Eklund 17B / Type B).